The chain runs to 213 residues: MSLNLGLIDYGMGNLHSVEKCLERLDQGCSLINNSDDLEGIDALILPGVGAFDPAMANLRATGLVPHLLRWGQEDRPLLGICLGLQLLFEQSDEGSDPGLGLLGGRVTRLPSKSGERIPHMGWAPLKHHGTCPLLSSDASSEWVYFVHSYAAVPTDRNDLKASAPFGDQEVTAVVWRGRVGACQFHPEKSSDAGEQMLKRWLTWLRNGAEPCP.

The region spanning N4–P211 is the Glutamine amidotransferase type-1 domain. C82 serves as the catalytic Nucleophile. Catalysis depends on residues H186 and E188.

As to quaternary structure, heterodimer of HisH and HisF.

The protein localises to the cytoplasm. It carries out the reaction 5-[(5-phospho-1-deoxy-D-ribulos-1-ylimino)methylamino]-1-(5-phospho-beta-D-ribosyl)imidazole-4-carboxamide + L-glutamine = D-erythro-1-(imidazol-4-yl)glycerol 3-phosphate + 5-amino-1-(5-phospho-beta-D-ribosyl)imidazole-4-carboxamide + L-glutamate + H(+). The catalysed reaction is L-glutamine + H2O = L-glutamate + NH4(+). The protein operates within amino-acid biosynthesis; L-histidine biosynthesis; L-histidine from 5-phospho-alpha-D-ribose 1-diphosphate: step 5/9. In terms of biological role, IGPS catalyzes the conversion of PRFAR and glutamine to IGP, AICAR and glutamate. The HisH subunit catalyzes the hydrolysis of glutamine to glutamate and ammonia as part of the synthesis of IGP and AICAR. The resulting ammonia molecule is channeled to the active site of HisF. The chain is Imidazole glycerol phosphate synthase subunit HisH from Synechococcus sp. (strain CC9605).